The chain runs to 126 residues: Large ribosomal subunit protein bL17 (126 aa).

Belongs to the bacterial ribosomal protein bL17 family. As to quaternary structure, part of the 50S ribosomal subunit. Contacts protein L32.

The protein is Large ribosomal subunit protein bL17 of Xylella fastidiosa (strain Temecula1 / ATCC 700964).